A 328-amino-acid polypeptide reads, in one-letter code: Phenylalanine--tRNA ligase alpha subunit (328 aa).

E253 is a Mg(2+) binding site.

The protein belongs to the class-II aminoacyl-tRNA synthetase family. Phe-tRNA synthetase alpha subunit type 1 subfamily. In terms of assembly, tetramer of two alpha and two beta subunits. It depends on Mg(2+) as a cofactor.

Its subcellular location is the cytoplasm. It catalyses the reaction tRNA(Phe) + L-phenylalanine + ATP = L-phenylalanyl-tRNA(Phe) + AMP + diphosphate + H(+). The chain is Phenylalanine--tRNA ligase alpha subunit from Coxiella burnetii (strain CbuG_Q212) (Coxiella burnetii (strain Q212)).